Here is a 220-residue protein sequence, read N- to C-terminus: UPF0758 protein APL_1970 (220 aa).

One can recognise an MPN domain in the interval 98–220 (NINEPYLAVM…YFSFEEEKFR (123 aa)). The Zn(2+) site is built by histidine 169, histidine 171, and aspartate 182. Residues 169-182 (HNHPSGNCTPSESD) carry the JAMM motif motif.

The protein belongs to the UPF0758 family.

This chain is UPF0758 protein APL_1970, found in Actinobacillus pleuropneumoniae serotype 5b (strain L20).